The following is a 110-amino-acid chain: Thiosulfate sulfurtransferase GlpE (110 aa).

Residues 17–105 (HQGKAVLVDI…WHRHFPAEVE (89 aa)) form the Rhodanese domain. The active-site Cysteine persulfide intermediate is cysteine 65.

This sequence belongs to the GlpE family.

It is found in the cytoplasm. It carries out the reaction thiosulfate + hydrogen cyanide = thiocyanate + sulfite + 2 H(+). The enzyme catalyses thiosulfate + [thioredoxin]-dithiol = [thioredoxin]-disulfide + hydrogen sulfide + sulfite + 2 H(+). Functionally, transferase that catalyzes the transfer of sulfur from thiosulfate to thiophilic acceptors such as cyanide or dithiols. May function in a CysM-independent thiosulfate assimilation pathway by catalyzing the conversion of thiosulfate to sulfite, which can then be used for L-cysteine biosynthesis. In Enterobacter sp. (strain 638), this protein is Thiosulfate sulfurtransferase GlpE.